The following is a 140-amino-acid chain: Small ribosomal subunit protein bS6 (140 aa).

The tract at residues 96-140 is disordered; the sequence is VTGQSEMLKAEENRSERRERRDRPEHEGADSADSDDSDNSDNADE. Over residues 103–124 the composition is skewed to basic and acidic residues; sequence LKAEENRSERRERRDRPEHEGA. A compositionally biased stretch (acidic residues) spans 125 to 140; the sequence is DSADSDDSDNSDNADE.

Belongs to the bacterial ribosomal protein bS6 family.

Functionally, binds together with bS18 to 16S ribosomal RNA. This chain is Small ribosomal subunit protein bS6, found in Pseudomonas fluorescens (strain SBW25).